Consider the following 133-residue polypeptide: Brain natriuretic peptide (133 aa).

The first 22 residues, 1–22 (MVVSFVSICGLLLIFNLPLSTS), serve as a signal peptide directing secretion. Residues 44–53 (SMSEETEEDQ) are compositionally biased toward acidic residues. 2 disordered regions span residues 44-76 (SMSE…NRDQ) and 93-112 (TRKN…FGRR). An intrachain disulfide couples Cys-108 to Cys-124.

Belongs to the natriuretic peptide family.

It is found in the secreted. In terms of biological role, cardiac hormone which may function as a paracrine antifibrotic factor in the heart. Also plays a key role in cardiovascular homeostasis through natriuresis, diuresis, vasorelaxation, and inhibition of renin and aldosterone secretion. Has a cGMP-stimulating activity. This Takifugu rubripes (Japanese pufferfish) protein is Brain natriuretic peptide (nppb).